Consider the following 1138-residue polypeptide: Lysylphosphatidylglycerol biosynthesis bifunctional protein LysX (1138 aa).

Residues 1 to 15 are compositionally biased toward polar residues; sequence MALDTPSSDLPVSTD. The segment at 1-34 is disordered; it reads MALDTPSSDLPVSTDDTAEHQPTPAHRPPSAADR. Residues 1–646 are phosphatidylglycerol lysyltransferase; that stretch reads MALDTPSSDL…LIAQLESEED (646 aa). Helical transmembrane passes span 56–76, 92–112, 119–139, 155–175, 190–210, and 247–267; these read IAGTVVGVLAGIALLSSIFPL, IVSLPNTSLAWAFVLALVAIA, IAWWIATIYLVLFMVSNALLL, IQIWIGLGIDAAALIFLIVTY, ALGVLIVGLTAATLVGWGLVW, and IVIDSALGLLGALALIAAATV. The segment at 647-1138 is lysine--tRNA ligase; the sequence is RTAVEVHRPE…AFPMVKPTDA (492 aa). Residues 698–772 constitute a DNA-binding region (OB); the sequence is VTIAGRVTKM…GELSVLIDAW (75 aa). 2 residues coordinate Mg(2+): aspartate 1048 and glutamate 1055.

In the N-terminal section; belongs to the LPG synthetase family. It in the C-terminal section; belongs to the class-II aminoacyl-tRNA synthetase family. Requires Mg(2+) as cofactor.

It localises to the cell membrane. It carries out the reaction tRNA(Lys) + L-lysine + ATP = L-lysyl-tRNA(Lys) + AMP + diphosphate. It catalyses the reaction L-lysyl-tRNA(Lys) + a 1,2-diacyl-sn-glycero-3-phospho-(1'-sn-glycerol) = a 1,2-diacyl-sn-glycero-3-phospho-1'-(3'-O-L-lysyl)-sn-glycerol + tRNA(Lys). Its function is as follows. Catalyzes the production of L-lysyl-tRNA(Lys)transfer and the transfer of a lysyl group from L-lysyl-tRNA(Lys) to membrane-bound phosphatidylglycerol (PG), which produces lysylphosphatidylglycerol (LPG), one of the components of the bacterial membrane with a positive net charge. LPG synthesis contributes to the resistance to cationic antimicrobial peptides (CAMPs) and likely protects M.tuberculosis against the CAMPs produced by competiting microorganisms (bacteriocins). In fact, the modification of anionic phosphatidylglycerol with positively charged L-lysine results in repulsion of the peptides. This is Lysylphosphatidylglycerol biosynthesis bifunctional protein LysX (lysX) from Gordonia bronchialis (strain ATCC 25592 / DSM 43247 / BCRC 13721 / JCM 3198 / KCTC 3076 / NBRC 16047 / NCTC 10667) (Rhodococcus bronchialis).